Here is a 418-residue protein sequence, read N- to C-terminus: MAKLLQPPPKFLPSEWHIANKNQYHRADAQRSRSERLVAESQRLVDEIEKTTRKSQSDVNKKLEQRLEEVQFWKKELDDKLEQLVNVTDDLLIYKIRLEKALETLKEPLHITETCLAYREKRIGIDLVHDTVEHELIKEAEIIQGIMALLTRTLEEASEQIRMNRSAKYNLEKDLKDKFVALTIDDICFSLNNNSPNIRYSENAVRIEPNSVSLEDWLDFSSTNVEKADKQRNNSLMLKALVDRILSQTANDLRKQCDVVDTAFKNGLKDTKDARDKLADHLAKVMEEIASQEKNITALEKAILDQEGPAKVAHTRLETRTHRPNVELCRDVAQYRLMKEVQEITHNVARLKETLAQAQAELKGLHRRQLALQEEIQVKENTIYIDEVLCMQMRKSIPLRDGEDHGVWAGGLRPDAVC.

Coiled-coil stretches lie at residues 21-107, 134-177, 266-308, and 333-384; these read KNQY…TLKE, HELI…DLKD, NGLK…DQEG, and AQYR…NTIY.

This sequence belongs to the tektin family. Microtubule inner protein component of sperm flagellar doublet microtubules. Post-translationally, ubiquitinated, leading to its degradation. Deubiquitinated by USP16, promoting its stability. In terms of tissue distribution, predominantly expressed in testis. Expressed in airway epithelial cells.

Its subcellular location is the cytoplasm. It localises to the cytoskeleton. The protein localises to the cilium axoneme. The protein resides in the flagellum axoneme. Its function is as follows. Microtubule inner protein (MIP) part of the dynein-decorated doublet microtubules (DMTs) in cilia and flagellar axoneme. Forms filamentous polymers in the walls of ciliary and flagellar microtubules. This chain is Tektin-1 (TEKT1), found in Homo sapiens (Human).